Consider the following 183-residue polypeptide: NADH-quinone oxidoreductase subunit A (183 aa).

Helical transmembrane passes span 11–31 (IIAF…VPLL), 63–83 (FYLV…LYAW), and 98–118 (VVIF…VGAL). A disordered region spans residues 159 to 183 (TGQIPAQSSGRVKSKTTPALSSEKE).

This sequence belongs to the complex I subunit 3 family. In terms of assembly, NDH-1 is composed of 14 different subunits. Subunits NuoA, H, J, K, L, M, N constitute the membrane sector of the complex.

The protein localises to the cell inner membrane. The enzyme catalyses a quinone + NADH + 5 H(+)(in) = a quinol + NAD(+) + 4 H(+)(out). Functionally, NDH-1 shuttles electrons from NADH, via FMN and iron-sulfur (Fe-S) centers, to quinones in the respiratory chain. The immediate electron acceptor for the enzyme in this species is believed to be ubiquinone. Couples the redox reaction to proton translocation (for every two electrons transferred, four hydrogen ions are translocated across the cytoplasmic membrane), and thus conserves the redox energy in a proton gradient. This chain is NADH-quinone oxidoreductase subunit A, found in Acinetobacter baumannii (strain ACICU).